The chain runs to 175 residues: Alpha-crystallin B chain (175 aa).

M1 is subject to N-acetylmethionine. At S19 the chain carries Phosphoserine. S41 carries O-linked (GlcNAc) serine glycosylation. 2 positions are modified to phosphoserine: S45 and S59. The 109-residue stretch at 56–164 (RAPSWIDTGL…PERTIPITRE (109 aa)) folds into the sHSP domain. Position 83 (H83) interacts with Zn(2+). K92 carries the N6-acetyllysine modification. Residues H104, E106, H111, and H119 each coordinate Zn(2+). Residues 139–175 (SDGVLTMNGPRKQASGPERTIPITREEKPAVTAAPKK) are disordered. The residue at position 166 (K166) is an N6-acetyllysine. The O-linked (GlcNAc) threonine glycan is linked to T170.

This sequence belongs to the small heat shock protein (HSP20) family. In terms of assembly, heteromer composed of three CRYAA and one CRYAB subunits. Aggregates with homologous proteins, including the small heat shock protein HSPB1, to form large heteromeric complexes. Inter-subunit bridging via zinc ions enhances stability, which is crucial as there is no protein turn over in the lens. Interacts with HSPBAP1 and TTN/titin. Interacts with TMEM109; in the cellular response to DNA damage. Interacts with DES; binds rapidly during early stages of DES filament assembly and a reduced binding seen in the later stages. Interacts with ATP6V1A and with MTOR, forming a ternary complex.

The protein localises to the cytoplasm. It localises to the nucleus. It is found in the secreted. The protein resides in the lysosome. Functionally, may contribute to the transparency and refractive index of the lens. Has chaperone-like activity, preventing aggregation of various proteins under a wide range of stress conditions. In lens epithelial cells, stabilizes the ATP6V1A protein, preventing its degradation by the proteasome. The protein is Alpha-crystallin B chain (CRYAB) of Ovis aries (Sheep).